The primary structure comprises 87 residues: Large ribosomal subunit protein bL31B (87 aa).

This sequence belongs to the bacterial ribosomal protein bL31 family. Type B subfamily. Part of the 50S ribosomal subunit.

In Escherichia coli O9:H4 (strain HS), this protein is Large ribosomal subunit protein bL31B.